The following is a 923-amino-acid chain: Periplasmic nitrate reductase (923 aa).

The tat-type signal signal peptide spans 1–30 (MNRRDFIKNTAIASAASVAGLSVPSSMLGA). The 57-residue stretch at 34–90 (WKWDKAVCRFCGTGCGIMIARKDGKIVATKGDPAAPVNRGLNCIKGYFNAKIMYGED) folds into the 4Fe-4S Mo/W bis-MGD-type domain. The [4Fe-4S] cluster site is built by C41, C44, C48, and C76. Mo-bis(molybdopterin guanine dinucleotide) is bound by residues K78, Q146, N171, C175, 208–215 (WGANMAEM), M416, Q420, N526, 551–552 (SD), K574, D601, and 813–822 (TGRVLEHWHS). W889 is a binding site for substrate. Positions 897 and 914 each coordinate Mo-bis(molybdopterin guanine dinucleotide).

This sequence belongs to the prokaryotic molybdopterin-containing oxidoreductase family. NasA/NapA/NarB subfamily. As to quaternary structure, component of the periplasmic nitrate reductase NapAB complex composed of NapA and NapB. [4Fe-4S] cluster serves as cofactor. Requires Mo-bis(molybdopterin guanine dinucleotide) as cofactor. Post-translationally, predicted to be exported by the Tat system. The position of the signal peptide cleavage has not been experimentally proven.

It localises to the periplasm. The catalysed reaction is 2 Fe(II)-[cytochrome] + nitrate + 2 H(+) = 2 Fe(III)-[cytochrome] + nitrite + H2O. Catalytic subunit of the periplasmic nitrate reductase complex NapAB. Receives electrons from NapB and catalyzes the reduction of nitrate to nitrite. This is Periplasmic nitrate reductase from Campylobacter jejuni subsp. jejuni serotype O:23/36 (strain 81-176).